The primary structure comprises 757 residues: Mitofusin-2 (757 aa).

Residues 1-604 (MSLLFSRCNS…TQEEFMVSMV (604 aa)) are Cytoplasmic-facing. The tract at residues 30 to 94 (KHFVTAKKKI…VRGISEVLAR (65 aa)) is part of a helix bundle domain, formed by helices from N-terminal and C-terminal regions. The region spanning 93–342 (ARRHMKVAFF…VRMFEFQNFE (250 aa)) is the Dynamin-type G domain. Positions 103 to 110 (GRTSNGKS) are G1 motif. Residue 106–111 (SNGKST) coordinates GTP. Threonine 111 is subject to Phosphothreonine; by PINK1. The tract at residues 129-130 (TT) is G2 motif. Residues 199-202 (DSPG) form a G3 motif region. 258–261 (NRWD) is a binding site for GTP. Residues 258–261 (NRWD) form a G4 motif region. Position 288 (glutamate 288) is a region of interest, G5 motif. GTP contacts are provided by serine 305 and lysine 307. Residues 359 to 385 (EQHTVRAKQIAEAVRLIMDSLHMAARE) are part of a helix bundle domain, formed by helices from N-terminal and C-terminal regions. The stretch at 391 to 434 (EEMREERQDRLKFIDKQLELLAQDYKLRIKQITEEVERQVSTAM) forms a coiled coil. The residue at position 442 (serine 442) is a Phosphoserine; by PINK1. The chain crosses the membrane as a helical span at residues 605–625 (TGLASLTSRTSMGILVVGGVV). A topological domain (mitochondrial intermembrane) is located at residue tryptophan 626. A helical membrane pass occupies residues 627-647 (KAVGWRLIALSFGLYGLLYVY). At 648 to 757 (ERLTWTTKAK…FTHQYLQPSR (110 aa)) the chain is on the cytoplasmic side. A coiled-coil region spans residues 695-738 (TFAHLCQQVDVTRENLEQEIAAMNKKIEVLDSLQSKAKLLRNKA). The segment at 722-753 (EVLDSLQSKAKLLRNKAGWLDSELNMFTHQYL) is part of a helix bundle domain, formed by helices from N-terminal and C-terminal regions.

It belongs to the TRAFAC class dynamin-like GTPase superfamily. Dynamin/Fzo/YdjA family. Mitofusin subfamily. As to quaternary structure, forms homomultimers and heteromultimers with MFN1. Oligomerization is essential for mitochondrion fusion. Interacts with VAT1. Interacts with STOML2; may form heterooligomers. Interacts (phosphorylated) with PRKN. Interacts with EIF2AK3. Interacts with THG1L; THG1L probably functions as a guanyl-nucleotide exchange factor/GEF, activating MFN2. Phosphorylated by PINK1. In terms of processing, ubiquitinated by non-degradative ubiquitin by PRKN, promoting mitochondrial fusion; deubiquitination by USP30 inhibits mitochondrial fusion. Ubiquitinated by HUWE1 when dietary stearate (C18:0) levels are low; ubiquitination inhibits mitochondrial fusion. As to expression, ubiquitous; expressed at low level. Highly expressed in heart and kidney.

It localises to the mitochondrion outer membrane. It catalyses the reaction GTP + H2O = GDP + phosphate + H(+). Mitochondrial outer membrane GTPase that mediates mitochondrial clustering and fusion. Mitochondria are highly dynamic organelles, and their morphology is determined by the equilibrium between mitochondrial fusion and fission events. Overexpression induces the formation of mitochondrial networks. Membrane clustering requires GTPase activity and may involve a major rearrangement of the coiled coil domains. Plays a central role in mitochondrial metabolism and may be associated with obesity and/or apoptosis processes. Plays an important role in the regulation of vascular smooth muscle cell proliferation. Involved in the clearance of damaged mitochondria via selective autophagy (mitophagy). Is required for PRKN recruitment to dysfunctional mitochondria. Involved in the control of unfolded protein response (UPR) upon ER stress including activation of apoptosis and autophagy during ER stress. Acts as an upstream regulator of EIF2AK3 and suppresses EIF2AK3 activation under basal conditions. This is Mitofusin-2 from Homo sapiens (Human).